An 891-amino-acid chain; its full sequence is Alanine--tRNA ligase (891 aa).

Zn(2+) contacts are provided by H574, H578, C676, and H680.

The protein belongs to the class-II aminoacyl-tRNA synthetase family. Zn(2+) serves as cofactor.

It is found in the cytoplasm. The catalysed reaction is tRNA(Ala) + L-alanine + ATP = L-alanyl-tRNA(Ala) + AMP + diphosphate. Catalyzes the attachment of alanine to tRNA(Ala) in a two-step reaction: alanine is first activated by ATP to form Ala-AMP and then transferred to the acceptor end of tRNA(Ala). Also edits incorrectly charged Ser-tRNA(Ala) and Gly-tRNA(Ala) via its editing domain. This chain is Alanine--tRNA ligase, found in Synechococcus sp. (strain WH7803).